A 453-amino-acid polypeptide reads, in one-letter code: Allantoinase (453 aa).

6 residues coordinate Zn(2+): H59, H61, K146, H186, H242, and D315. K146 is subject to N6-carboxylysine.

Belongs to the metallo-dependent hydrolases superfamily. Allantoinase family. Homotetramer. It depends on Zn(2+) as a cofactor. Carboxylation allows a single lysine to coordinate two zinc ions.

The enzyme catalyses (S)-allantoin + H2O = allantoate + H(+). It functions in the pathway nitrogen metabolism; (S)-allantoin degradation; allantoate from (S)-allantoin: step 1/1. Functionally, catalyzes the conversion of allantoin (5-ureidohydantoin) to allantoic acid by hydrolytic cleavage of the five-member hydantoin ring. The protein is Allantoinase of Escherichia coli O9:H4 (strain HS).